The primary structure comprises 1120 residues: Vacuolar cation-chloride cotransporter 1 (1120 aa).

Residues 1–21 (MVSRFYQIPGTHRPSSAISSS) are disordered. Residues 1 to 62 (MVSRFYQIPG…YDPDNPNKDK (62 aa)) lie on the Cytoplasmic side of the membrane. Ser34 is modified (phosphoserine). Residues 63 to 83 (LGTYDGVFVPTALNVLSILMF) traverse the membrane as a helical segment. The Vacuolar segment spans residues 84–85 (LR). A helical membrane pass occupies residues 86–106 (FGFILGQLGIICTIGLLLLSY). The Cytoplasmic portion of the chain corresponds to 107–145 (TINLLTTLSISAISTNGTVRGGGAYYMISRSLGPEFGGS). The chain crosses the membrane as a helical span at residues 146–166 (IGLVFFLGQVFNAGMNAVGII). The Vacuolar portion of the chain corresponds to 167–193 (EPLLYNLGYSAQGEPPAALGELLPRGH). Residues 194–214 (WHEFTYATVILFLCFSVAFVG) form a helical membrane-spanning segment. At 215–221 (SQTVSRA) the chain is on the cytoplasmic side. A helical transmembrane segment spans residues 222–242 (GNILFLVLAASIFSIPLSALI). The Vacuolar segment spans residues 243–283 (RSPFTEGGISYTGPSWQTFHDNLLPHLTKGAAGSLLKGKET). Residues 284–304 (FNDLFGVFFPATAGIFAGAGM) form a helical membrane-spanning segment. Topologically, residues 305–317 (SSELRKPSKSIPK) are cytoplasmic. Residues 318–338 (GTLWGLLFTFICYAVVVFSMG) traverse the membrane as a helical segment. Residues 339–360 (CSIPRRSLYDEVQIIQTISSVQ) are Vacuolar-facing. Residues 361-381 (WVIFMGEMATSLFSIIVGMLG) form a helical membrane-spanning segment. The Cytoplasmic portion of the chain corresponds to 382–393 (AAYVLEAIAKDN). Residues 394-414 (IIPGLEIFAHSPLYSLIFTWI) form a helical membrane-spanning segment. Topologically, residues 415–430 (LTQLCLFSDVNKIATF) are vacuolar. A helical transmembrane segment spans residues 431–451 (ITMTFLMTFVVMNLACFLLGI). Residues 452–462 (SSAPNFRPSFK) are Cytoplasmic-facing. A helical transmembrane segment spans residues 463–482 (YFNRYTTAIGALLSVVAMLI). The Vacuolar portion of the chain corresponds to 483-487 (VDGIS). The helical transmembrane segment at 488-506 (ASVLFLAMILLFLFIHYFS) threads the bilayer. Residues 507–1120 (PPKSWGDVSQ…SQTMTVTTAL (614 aa)) are Cytoplasmic-facing. Residues Ser654, Ser915, and Ser918 each carry the phosphoserine modification.

This sequence belongs to the SLC12A transporter family.

It localises to the vacuole membrane. Functionally, catalyzes the coordinated symport of chloride with potassium ions across the vacuolar membrane. Involved in vacuolar osmoregulation. The polypeptide is Vacuolar cation-chloride cotransporter 1 (Saccharomyces cerevisiae (strain ATCC 204508 / S288c) (Baker's yeast)).